The following is a 96-amino-acid chain: Seed trypsin/chymotrypsin inhibitor IVA (96 aa).

The N-terminal stretch at 1 to 10 is a signal peptide; it reads LSFAANVVNA. A propeptide spanning residues 11–24 is cleaved from the precursor; that stretch reads RFDSTSFITQVLSN. Intrachain disulfides connect Cys-32–Cys-85, Cys-33–Cys-48, Cys-36–Cys-81, Cys-38–Cys-46, Cys-55–Cys-62, Cys-59–Cys-74, and Cys-64–Cys-72. Residues 88-96 constitute a propeptide, removed in PSTI I; the sequence is SEVEEVIKN.

Belongs to the Bowman-Birk serine protease inhibitor family. Seed.

In terms of biological role, inhibitor of trypsin and of chymotrypsin. May function as a natural phytochemical defense against predators. The sequence is that of Seed trypsin/chymotrypsin inhibitor IVA (TI1236) from Pisum sativum (Garden pea).